Here is a 343-residue protein sequence, read N- to C-terminus: Uroporphyrinogen decarboxylase (343 aa).

Substrate is bound by residues 23 to 27 (RQAGR), D73, Y151, S206, and H322.

This sequence belongs to the uroporphyrinogen decarboxylase family. Homodimer.

Its subcellular location is the cytoplasm. It carries out the reaction uroporphyrinogen III + 4 H(+) = coproporphyrinogen III + 4 CO2. It functions in the pathway porphyrin-containing compound metabolism; protoporphyrin-IX biosynthesis; coproporphyrinogen-III from 5-aminolevulinate: step 4/4. Its function is as follows. Catalyzes the decarboxylation of four acetate groups of uroporphyrinogen-III to yield coproporphyrinogen-III. This is Uroporphyrinogen decarboxylase from Granulibacter bethesdensis (strain ATCC BAA-1260 / CGDNIH1).